A 539-amino-acid chain; its full sequence is Probable protein kinase UbiB (539 aa).

The chain crosses the membrane as a helical span at residues 23–43; the sequence is DLLFALPLPWWMLAVRFVLPW. A Protein kinase domain is found at 125–492; it reads RFDETPLASA…WHDRKDEPVL (368 aa). ATP-binding positions include 131-139 and K153; that span reads LASASVAQV. D288 (proton acceptor) is an active-site residue. Helical transmembrane passes span 494-514 and 517-537; these read LIGAALLVGGAIQGWVMSEAA and LLTLTAWPAAIMLIAGLYLIV.

The protein belongs to the ABC1 family. UbiB subfamily.

It is found in the cell inner membrane. The protein operates within cofactor biosynthesis; ubiquinone biosynthesis [regulation]. Is probably a protein kinase regulator of UbiI activity which is involved in aerobic coenzyme Q (ubiquinone) biosynthesis. The sequence is that of Probable protein kinase UbiB from Pseudomonas syringae pv. tomato (strain ATCC BAA-871 / DC3000).